Consider the following 514-residue polypeptide: uncharacterized protein (514 aa).

Disordered regions lie at residues Met1 to Glu68, Val109 to Ser244, and Arg272 to Cys484. Residues Lys368 to Arg384 are compositionally biased toward basic residues. Residues Lys385–Pro405 are compositionally biased toward basic and acidic residues.

This is an uncharacterized protein from Homo sapiens (Human).